The following is a 488-amino-acid chain: Glutamyl-tRNA(Gln) amidotransferase subunit A (488 aa).

Active-site charge relay system residues include Lys77 and Ser152. Residue Ser176 is the Acyl-ester intermediate of the active site.

This sequence belongs to the amidase family. GatA subfamily. As to quaternary structure, heterotrimer of A, B and C subunits.

It catalyses the reaction L-glutamyl-tRNA(Gln) + L-glutamine + ATP + H2O = L-glutaminyl-tRNA(Gln) + L-glutamate + ADP + phosphate + H(+). Functionally, allows the formation of correctly charged Gln-tRNA(Gln) through the transamidation of misacylated Glu-tRNA(Gln) in organisms which lack glutaminyl-tRNA synthetase. The reaction takes place in the presence of glutamine and ATP through an activated gamma-phospho-Glu-tRNA(Gln). The polypeptide is Glutamyl-tRNA(Gln) amidotransferase subunit A (Streptococcus pneumoniae (strain JJA)).